Here is a 211-residue protein sequence, read N- to C-terminus: Large ribosomal subunit protein uL3 (211 aa).

N5-methylglutamine is present on Gln-150.

The protein belongs to the universal ribosomal protein uL3 family. As to quaternary structure, part of the 50S ribosomal subunit. Forms a cluster with proteins L14 and L19. Methylated by PrmB.

In terms of biological role, one of the primary rRNA binding proteins, it binds directly near the 3'-end of the 23S rRNA, where it nucleates assembly of the 50S subunit. This Pseudomonas aeruginosa (strain LESB58) protein is Large ribosomal subunit protein uL3.